Consider the following 423-residue polypeptide: CinA-like protein (423 aa).

It belongs to the CinA family.

This is CinA-like protein from Chlorobium chlorochromatii (strain CaD3).